The primary structure comprises 430 residues: Glutamate-1-semialdehyde 2,1-aminomutase (430 aa).

At Lys-265 the chain carries N6-(pyridoxal phosphate)lysine.

Belongs to the class-III pyridoxal-phosphate-dependent aminotransferase family. HemL subfamily. Homodimer. Requires pyridoxal 5'-phosphate as cofactor.

Its subcellular location is the cytoplasm. The catalysed reaction is (S)-4-amino-5-oxopentanoate = 5-aminolevulinate. It functions in the pathway porphyrin-containing compound metabolism; protoporphyrin-IX biosynthesis; 5-aminolevulinate from L-glutamyl-tRNA(Glu): step 2/2. The sequence is that of Glutamate-1-semialdehyde 2,1-aminomutase from Shewanella sp. (strain MR-4).